The chain runs to 376 residues: UPF0754 membrane protein SERP1382 (376 aa).

Helical transmembrane passes span I4–I24 and T356–V376.

It belongs to the UPF0754 family.

Its subcellular location is the cell membrane. In Staphylococcus epidermidis (strain ATCC 35984 / DSM 28319 / BCRC 17069 / CCUG 31568 / BM 3577 / RP62A), this protein is UPF0754 membrane protein SERP1382.